A 156-amino-acid polypeptide reads, in one-letter code: 6,7-dimethyl-8-ribityllumazine synthase (156 aa).

Residues Phe22, 57–59 (AVE), and 81–83 (CVI) each bind 5-amino-6-(D-ribitylamino)uracil. Residue 86–87 (GT) participates in (2S)-2-hydroxy-3-oxobutyl phosphate binding. The active-site Proton donor is the His89. Phe114 is a binding site for 5-amino-6-(D-ribitylamino)uracil. Position 128 (Arg128) interacts with (2S)-2-hydroxy-3-oxobutyl phosphate.

Belongs to the DMRL synthase family. Forms an icosahedral capsid composed of 60 subunits, arranged as a dodecamer of pentamers.

The catalysed reaction is (2S)-2-hydroxy-3-oxobutyl phosphate + 5-amino-6-(D-ribitylamino)uracil = 6,7-dimethyl-8-(1-D-ribityl)lumazine + phosphate + 2 H2O + H(+). The protein operates within cofactor biosynthesis; riboflavin biosynthesis; riboflavin from 2-hydroxy-3-oxobutyl phosphate and 5-amino-6-(D-ribitylamino)uracil: step 1/2. In terms of biological role, catalyzes the formation of 6,7-dimethyl-8-ribityllumazine by condensation of 5-amino-6-(D-ribitylamino)uracil with 3,4-dihydroxy-2-butanone 4-phosphate. This is the penultimate step in the biosynthesis of riboflavin. The chain is 6,7-dimethyl-8-ribityllumazine synthase from Tolumonas auensis (strain DSM 9187 / NBRC 110442 / TA 4).